We begin with the raw amino-acid sequence, 130 residues long: Ribosome-binding factor A (130 aa).

The protein belongs to the RbfA family. Monomer. Binds 30S ribosomal subunits, but not 50S ribosomal subunits or 70S ribosomes.

The protein localises to the cytoplasm. Functionally, one of several proteins that assist in the late maturation steps of the functional core of the 30S ribosomal subunit. Associates with free 30S ribosomal subunits (but not with 30S subunits that are part of 70S ribosomes or polysomes). Required for efficient processing of 16S rRNA. May interact with the 5'-terminal helix region of 16S rRNA. In Roseiflexus castenholzii (strain DSM 13941 / HLO8), this protein is Ribosome-binding factor A.